The sequence spans 204 residues: Recombination protein RecR (204 aa).

The C4-type zinc finger occupies 63 to 78; that stretch reads CRRCFNITVGELCAIC. Residues 86 to 181 enclose the Toprim domain; the sequence is TKICVVEEPL…RVTRPARGLP (96 aa).

Belongs to the RecR family.

May play a role in DNA repair. It seems to be involved in an RecBC-independent recombinational process of DNA repair. It may act with RecF and RecO. In Chloroflexus aurantiacus (strain ATCC 29366 / DSM 635 / J-10-fl), this protein is Recombination protein RecR.